A 79-amino-acid chain; its full sequence is Cell division protein ZapB (79 aa).

The stretch at leucine 3 to valine 79 forms a coiled coil. Position 8 is an N6-acetyllysine (lysine 8). A disordered region spans residues asparagine 34–tryptophan 65. Residues asparagine 35–glutamine 45 are compositionally biased toward polar residues. Over residues histidine 46–glutamate 60 the composition is skewed to basic and acidic residues.

It belongs to the ZapB family. In terms of assembly, homodimer. The ends of the coiled-coil dimer bind to each other, forming polymers. Interacts with FtsZ.

The protein localises to the cytoplasm. Its function is as follows. Non-essential, abundant cell division factor that is required for proper Z-ring formation. It is recruited early to the divisome by direct interaction with FtsZ, stimulating Z-ring assembly and thereby promoting cell division earlier in the cell cycle. Its recruitment to the Z-ring requires functional FtsA or ZipA. In Shigella boydii serotype 18 (strain CDC 3083-94 / BS512), this protein is Cell division protein ZapB.